We begin with the raw amino-acid sequence, 419 residues long: UDP-N-acetylglucosamine 1-carboxyvinyltransferase (419 aa).

22 to 23 (KN) serves as a coordination point for phosphoenolpyruvate. Residue arginine 91 coordinates UDP-N-acetyl-alpha-D-glucosamine. Cysteine 115 functions as the Proton donor in the catalytic mechanism. Cysteine 115 carries the post-translational modification 2-(S-cysteinyl)pyruvic acid O-phosphothioketal. UDP-N-acetyl-alpha-D-glucosamine-binding positions include 120 to 124 (RPVDL), 160 to 163 (KVSV), aspartate 305, and valine 327.

It belongs to the EPSP synthase family. MurA subfamily.

It localises to the cytoplasm. The catalysed reaction is phosphoenolpyruvate + UDP-N-acetyl-alpha-D-glucosamine = UDP-N-acetyl-3-O-(1-carboxyvinyl)-alpha-D-glucosamine + phosphate. It functions in the pathway cell wall biogenesis; peptidoglycan biosynthesis. Its function is as follows. Cell wall formation. Adds enolpyruvyl to UDP-N-acetylglucosamine. The polypeptide is UDP-N-acetylglucosamine 1-carboxyvinyltransferase (Salmonella agona (strain SL483)).